Consider the following 873-residue polypeptide: Cyanophycin synthetase (873 aa).

In terms of domain architecture, ATP-grasp spans 224–480 (KTILQDAGIP…VAAPVLDMLF (257 aa)). 495–501 (GTNGKTT) provides a ligand contact to ATP.

It in the C-terminal section; belongs to the MurCDEF family. As to quaternary structure, homodimer.

It carries out the reaction [L-4-(L-arginin-2-N-yl)aspartate](n) + L-aspartate + ATP = [L-4-(L-arginin-2-N-yl)aspartate](n)-L-aspartate + ADP + phosphate + H(+). The catalysed reaction is [L-4-(L-arginin-2-N-yl)aspartate](n)-L-aspartate + L-arginine + ATP = [L-4-(L-arginin-2-N-yl)aspartate](n+1) + ADP + phosphate + H(+). Catalyzes the ATP-dependent polymerization of arginine and aspartate to multi-L-arginyl-poly-L-aspartic acid (cyanophycin; a water-insoluble reserve polymer). The chain is Cyanophycin synthetase (cphA) from Synechocystis sp. (strain ATCC 27184 / PCC 6803 / Kazusa).